Here is a 341-residue protein sequence, read N- to C-terminus: UDP-3-O-acylglucosamine N-acyltransferase (341 aa).

H241 functions as the Proton acceptor in the catalytic mechanism.

It belongs to the transferase hexapeptide repeat family. LpxD subfamily. Homotrimer.

It catalyses the reaction a UDP-3-O-[(3R)-3-hydroxyacyl]-alpha-D-glucosamine + a (3R)-hydroxyacyl-[ACP] = a UDP-2-N,3-O-bis[(3R)-3-hydroxyacyl]-alpha-D-glucosamine + holo-[ACP] + H(+). The protein operates within bacterial outer membrane biogenesis; LPS lipid A biosynthesis. Functionally, catalyzes the N-acylation of UDP-3-O-acylglucosamine using 3-hydroxyacyl-ACP as the acyl donor. Is involved in the biosynthesis of lipid A, a phosphorylated glycolipid that anchors the lipopolysaccharide to the outer membrane of the cell. In Mannheimia succiniciproducens (strain KCTC 0769BP / MBEL55E), this protein is UDP-3-O-acylglucosamine N-acyltransferase.